The following is a 248-amino-acid chain: PF03932 family protein CutC (248 aa).

This sequence belongs to the CutC family. In terms of assembly, homodimer.

Its subcellular location is the cytoplasm. The protein is PF03932 family protein CutC of Escherichia coli O7:K1 (strain IAI39 / ExPEC).